We begin with the raw amino-acid sequence, 370 residues long: MEGVDLLGFLIITLNCNVTMVGKLWFVLTMLLRMLVIVLAGRPVYQDEQERFVCNTLQPGCANVCYDVFSPVSHLRFWLIQGVCVLLPSAVFSVYVLHRGATLAALGPRRCPDPREPASGQRRCPRPFGERGGLQVPDFSAGYIIHLLLRTLLEAAFGALHYFLFGFLAPKKFPCTRPPCTGVVDCYVSRPTEKSLLMLFLWAVSALSFLLGLADLVCSLRRRMRRRPGPPTSPSIRKQSGASGHAEGRRTDEEGGREEEGAPAPPGARAGGEGAGSPRRTSRVSGHTKIPDEDESEVTSSASEKLGRQPRGRPHREAAQDPRGSGSEEQPSAAPSRLAAPPSCSSLQPPDPPASSSGAPHLRARKSEWV.

Residues 1 to 19 are Cytoplasmic-facing; sequence MEGVDLLGFLIITLNCNVT. Residues 20–40 traverse the membrane as a helical segment; the sequence is MVGKLWFVLTMLLRMLVIVLA. The Extracellular portion of the chain corresponds to 41 to 76; sequence GRPVYQDEQERFVCNTLQPGCANVCYDVFSPVSHLR. Residues 77–97 form a helical membrane-spanning segment; that stretch reads FWLIQGVCVLLPSAVFSVYVL. The Cytoplasmic segment spans residues 98-146; the sequence is HRGATLAALGPRRCPDPREPASGQRRCPRPFGERGGLQVPDFSAGYIIH. The helical transmembrane segment at 147-167 threads the bilayer; sequence LLLRTLLEAAFGALHYFLFGF. Topologically, residues 168 to 196 are extracellular; it reads LAPKKFPCTRPPCTGVVDCYVSRPTEKSL. Residues 197-217 traverse the membrane as a helical segment; it reads LMLFLWAVSALSFLLGLADLV. Residues 218–370 are Cytoplasmic-facing; it reads CSLRRRMRRR…HLRARKSEWV (153 aa). Residues 224 to 370 form a disordered region; it reads MRRRPGPPTS…HLRARKSEWV (147 aa). Positions 246 to 260 are enriched in basic and acidic residues; it reads AEGRRTDEEGGREEE. A compositionally biased stretch (low complexity) spans 331–346; the sequence is PSAAPSRLAAPPSCSS.

This sequence belongs to the connexin family. Delta-type subfamily. A connexon is composed of a hexamer of connexins. As to expression, expressed in pancreas, kidney, skeletal muscle, liver, placenta, and heart.

Its subcellular location is the cell membrane. It localises to the cell junction. It is found in the gap junction. One gap junction consists of a cluster of closely packed pairs of transmembrane channels, the connexons, through which materials of low MW diffuse from one cell to a neighboring cell. The protein is Gap junction delta-4 protein (GJD4) of Homo sapiens (Human).